The primary structure comprises 63 residues: Large ribosomal subunit protein bL28 (63 aa).

Residues 1-21 (MSRRDDLTGKGPMFGNNRSHA) form a disordered region.

It belongs to the bacterial ribosomal protein bL28 family.

This is Large ribosomal subunit protein bL28 from Mycoplasmopsis pulmonis (strain UAB CTIP) (Mycoplasma pulmonis).